The following is a 170-amino-acid chain: Adenine phosphoribosyltransferase (170 aa).

The protein belongs to the purine/pyrimidine phosphoribosyltransferase family. Homodimer.

It localises to the cytoplasm. The enzyme catalyses AMP + diphosphate = 5-phospho-alpha-D-ribose 1-diphosphate + adenine. It functions in the pathway purine metabolism; AMP biosynthesis via salvage pathway; AMP from adenine: step 1/1. Its function is as follows. Catalyzes a salvage reaction resulting in the formation of AMP, that is energically less costly than de novo synthesis. This is Adenine phosphoribosyltransferase from Mesoplasma florum (strain ATCC 33453 / NBRC 100688 / NCTC 11704 / L1) (Acholeplasma florum).